The chain runs to 361 residues: Chorismate synthase (361 aa).

NADP(+)-binding residues include Arg48 and Arg54. Residues 125 to 127 (RSS), 238 to 239 (NA), Gly278, 293 to 297 (KPTSS), and Arg319 contribute to the FMN site.

It belongs to the chorismate synthase family. In terms of assembly, homotetramer. Requires FMNH2 as cofactor.

The enzyme catalyses 5-O-(1-carboxyvinyl)-3-phosphoshikimate = chorismate + phosphate. It functions in the pathway metabolic intermediate biosynthesis; chorismate biosynthesis; chorismate from D-erythrose 4-phosphate and phosphoenolpyruvate: step 7/7. Its function is as follows. Catalyzes the anti-1,4-elimination of the C-3 phosphate and the C-6 proR hydrogen from 5-enolpyruvylshikimate-3-phosphate (EPSP) to yield chorismate, which is the branch point compound that serves as the starting substrate for the three terminal pathways of aromatic amino acid biosynthesis. This reaction introduces a second double bond into the aromatic ring system. In Pectobacterium carotovorum subsp. carotovorum (strain PC1), this protein is Chorismate synthase.